The chain runs to 394 residues: Stearoyl-[acyl-carrier-protein] 9-desaturase 1, chloroplastic (394 aa).

The transit peptide at M1–R37 directs the protein to the chloroplast. Residues E135, E173, H176, E226, E259, and H262 each coordinate Fe cation.

It belongs to the fatty acid desaturase type 2 family. Homodimer. Requires Fe(2+) as cofactor. As to expression, ubiquitously expressed.

Its subcellular location is the plastid. It is found in the chloroplast. It carries out the reaction octadecanoyl-[ACP] + 2 reduced [2Fe-2S]-[ferredoxin] + O2 + 2 H(+) = (9Z)-octadecenoyl-[ACP] + 2 oxidized [2Fe-2S]-[ferredoxin] + 2 H2O. The protein operates within lipid metabolism; fatty acid metabolism. Its function is as follows. Converts stearoyl-ACP to oleoyl-ACP by introduction of a cis double bond between carbons 9 and 10 of the acyl chain. This chain is Stearoyl-[acyl-carrier-protein] 9-desaturase 1, chloroplastic (S-ACP-DES1), found in Arabidopsis thaliana (Mouse-ear cress).